The chain runs to 432 residues: MAQFYSAKRRVTTREIITVTTDGLDAFGQGVARHHGKALFIAGLLPGERAEVVLSEDKKQFARGDVKKRLSESPERETPRCPHFGVCGGCQQQHASVALQQRSKAQALCRMMKREVDEVISGPAWGYRRRARLSLNFTPRKPGLQMGFRKAGSNDLVDVHRCPVLVPRLEALLPKLRDCLSSLDGVRHLGHVELVDVTSGPLMVLRHLKPLSAADREKLECFSHSEGVALYLAPQSDTLEHLNGEMPWYESDGLRLTFSPRDFIQVNDAVNQQMVARALEWLEIQPGERVLDLFCGMGNFTLPLARRAESVVGVEGVAALVEKGDYNAGLNALKNVTFFQHNLEEDVTRQPWAQQGFDKVLLDPARAGAAGVMQHIVKLKPRRVVYVSCNPATLMRDSETLLAAGYRTVRLAMLDMFPHTGHLESMALFERD.

Residues 10–68 enclose the TRAM domain; that stretch reads RVTTREIITVTTDGLDAFGQGVARHHGKALFIAGLLPGERAEVVLSEDKKQFARGDVKK. Residues Cys81, Cys87, Cys90, and Cys162 each contribute to the [4Fe-4S] cluster site. Residues Gln265, Phe294, Asn299, Glu315, Asn342, and Asp363 each coordinate S-adenosyl-L-methionine. The active-site Nucleophile is the Cys389.

Belongs to the class I-like SAM-binding methyltransferase superfamily. RNA M5U methyltransferase family. RlmD subfamily.

It carries out the reaction uridine(1939) in 23S rRNA + S-adenosyl-L-methionine = 5-methyluridine(1939) in 23S rRNA + S-adenosyl-L-homocysteine + H(+). In terms of biological role, catalyzes the formation of 5-methyl-uridine at position 1939 (m5U1939) in 23S rRNA. The chain is 23S rRNA (uracil(1939)-C(5))-methyltransferase RlmD from Cronobacter sakazakii (strain ATCC BAA-894) (Enterobacter sakazakii).